A 743-amino-acid chain; its full sequence is Tegument protein UL46 homolog (743 aa).

Disordered regions lie at residues Gly437–Ala481, His522–Met590, and Arg693–Leu743. Over residues Asp526–Thr552 the composition is skewed to low complexity. Polar residues-rich tracts occupy residues Gln573–Asn586 and Gly697–Ser716. Residues Arg722–Leu743 are compositionally biased toward low complexity.

It belongs to the herpesviridae HHV-1 VP11/12 protein family. As to quaternary structure, interacts with VP16.

The protein resides in the virion tegument. Its subcellular location is the host cell membrane. In terms of biological role, abundant tegument protein. Trans-activates the immediate early genes. The polypeptide is Tegument protein UL46 homolog (Equus caballus (Horse)).